We begin with the raw amino-acid sequence, 189 residues long: MRPPRGGGSFRGRGGRDNGGRGRGRGRGRGRFGGGNYDEGPPSEVVEVATFLHACEGDAVFKLSNVKIPHFNAPIYLQNKTQIGRVDEIFGPINESLFSIKMREGIVATSYSQGDKFFISPEKLLPLSRFLPQPKGQSGGRGEGRVPPRGRGPPRGRGNFRGRGAPRGASRGFQPRGGPRGGFRGRGRA.

Positions 1–12 (MRPPRGGGSFRG) are enriched in gly residues. Disordered regions lie at residues 1–39 (MRPP…NYDE) and 129–189 (RFLP…RGRA). Over residues 162–177 (GRGAPRGASRGFQPRG) the composition is skewed to low complexity.

The protein belongs to the GAR1 family. As to quaternary structure, component of the small nucleolar ribonucleoprotein particle containing H/ACA-type snoRNAs (H/ACA snoRNPs).

It localises to the nucleus. The protein resides in the nucleolus. In terms of biological role, required for ribosome biogenesis. Part of a complex which catalyzes pseudouridylation of rRNA. This involves the isomerization of uridine such that the ribose is subsequently attached to C5, instead of the normal N1. Pseudouridine ('psi') residues may serve to stabilize the conformation of rRNAs. This chain is H/ACA ribonucleoprotein complex subunit 1-like protein 2, found in Arabidopsis thaliana (Mouse-ear cress).